Consider the following 418-residue polypeptide: Tyrosine--tRNA ligase (418 aa).

Tyr34 is an L-tyrosine binding site. Positions 39–48 (PTADSLHLGH) match the 'HIGH' region motif. Positions 169 and 173 each coordinate L-tyrosine. Positions 229–233 (KFGKS) match the 'KMSKS' region motif. Lys232 contacts ATP. Positions 352–418 (NNIVELLVSS…GKKKYFVLTY (67 aa)) constitute an S4 RNA-binding domain.

The protein belongs to the class-I aminoacyl-tRNA synthetase family. TyrS type 1 subfamily. In terms of assembly, homodimer.

The protein resides in the cytoplasm. The catalysed reaction is tRNA(Tyr) + L-tyrosine + ATP = L-tyrosyl-tRNA(Tyr) + AMP + diphosphate + H(+). Functionally, catalyzes the attachment of tyrosine to tRNA(Tyr) in a two-step reaction: tyrosine is first activated by ATP to form Tyr-AMP and then transferred to the acceptor end of tRNA(Tyr). This is Tyrosine--tRNA ligase from Streptococcus pneumoniae (strain 70585).